The sequence spans 434 residues: Methylenetetrahydrofolate--tRNA-(uracil-5-)-methyltransferase TrmFO (434 aa).

Residue 9 to 14 (GAGLAG) participates in FAD binding.

It belongs to the MnmG family. TrmFO subfamily. FAD is required as a cofactor.

The protein localises to the cytoplasm. The enzyme catalyses uridine(54) in tRNA + (6R)-5,10-methylene-5,6,7,8-tetrahydrofolate + NADH + H(+) = 5-methyluridine(54) in tRNA + (6S)-5,6,7,8-tetrahydrofolate + NAD(+). It carries out the reaction uridine(54) in tRNA + (6R)-5,10-methylene-5,6,7,8-tetrahydrofolate + NADPH + H(+) = 5-methyluridine(54) in tRNA + (6S)-5,6,7,8-tetrahydrofolate + NADP(+). Catalyzes the folate-dependent formation of 5-methyl-uridine at position 54 (M-5-U54) in all tRNAs. The sequence is that of Methylenetetrahydrofolate--tRNA-(uracil-5-)-methyltransferase TrmFO from Listeria innocua serovar 6a (strain ATCC BAA-680 / CLIP 11262).